The following is a 309-amino-acid chain: Mitochondrial succinate-fumarate transporter 1 (309 aa).

3 Solcar repeats span residues 11-96 (IPPY…FQTA), 108-196 (RGRF…FDIL), and 208-298 (LQPW…VTGL). The next 6 membrane-spanning stretches (helical) occupy residues 17-37 (AVSG…IDVI), 65-85 (VRAL…KYTL), 111-131 (FLSG…PFEV), 171-191 (GAAP…TAKN), 214-234 (MISG…FDVV), and 273-293 (GLLP…AVAD).

Belongs to the mitochondrial carrier (TC 2.A.29) family. As to expression, expressed in root tips, cotyledons, hypocotyls, leaves, trichomes, stems, flowers, carpels, anthers, pollen and abscission zone of siliques.

The protein resides in the mitochondrion inner membrane. In terms of biological role, may transport cytoplasmic succinate, derived from fatty acid oxidation, into the mitochondrial matrix in exchange of fumarate during lipid mobilization in seed germination. Conversion of seed-reserved triacylglycerols into sucrose is necessary for growth before the onset of photosynthesis and involves fatty acid beta-oxidation, the glyoxylate cycle and gluconeogenesis. The polypeptide is Mitochondrial succinate-fumarate transporter 1 (SFC1) (Arabidopsis thaliana (Mouse-ear cress)).